A 276-amino-acid polypeptide reads, in one-letter code: Formamidopyrimidine-DNA glycosylase (276 aa).

Pro-2 serves as the catalytic Schiff-base intermediate with DNA. Glu-3 acts as the Proton donor in catalysis. The active-site Proton donor; for beta-elimination activity is the Lys-58. The DNA site is built by His-94, Arg-112, and Arg-157. The segment at 242–276 adopts an FPG-type zinc-finger fold; that stretch reads FVYDRAGEPCRVCGAPIRQIVQGQRSTYYCPNCQR. The active-site Proton donor; for delta-elimination activity is Arg-266.

It belongs to the FPG family. Monomer. Requires Zn(2+) as cofactor.

It catalyses the reaction Hydrolysis of DNA containing ring-opened 7-methylguanine residues, releasing 2,6-diamino-4-hydroxy-5-(N-methyl)formamidopyrimidine.. The enzyme catalyses 2'-deoxyribonucleotide-(2'-deoxyribose 5'-phosphate)-2'-deoxyribonucleotide-DNA = a 3'-end 2'-deoxyribonucleotide-(2,3-dehydro-2,3-deoxyribose 5'-phosphate)-DNA + a 5'-end 5'-phospho-2'-deoxyribonucleoside-DNA + H(+). Involved in base excision repair of DNA damaged by oxidation or by mutagenic agents. Acts as a DNA glycosylase that recognizes and removes damaged bases. Has a preference for oxidized purines, such as 7,8-dihydro-8-oxoguanine (8-oxoG). Has AP (apurinic/apyrimidinic) lyase activity and introduces nicks in the DNA strand. Cleaves the DNA backbone by beta-delta elimination to generate a single-strand break at the site of the removed base with both 3'- and 5'-phosphates. The protein is Formamidopyrimidine-DNA glycosylase of Burkholderia thailandensis (strain ATCC 700388 / DSM 13276 / CCUG 48851 / CIP 106301 / E264).